Reading from the N-terminus, the 670-residue chain is Serine/threonine-rich protein adg2 (670 aa).

A signal peptide spans 1–19 (MRRLTISGLLISLAKLCAG). 17 N-linked (GlcNAc...) asparagine glycosylation sites follow: N77, N159, N204, N224, N274, N297, N327, N351, N370, N381, N405, N424, N435, N459, N478, N489, and N513. The segment at 526–651 (GSVSSFSSSP…MSLPPSAGSS (126 aa)) is disordered.

It localises to the secreted. Its subcellular location is the endoplasmic reticulum. This is Serine/threonine-rich protein adg2 (adg2) from Schizosaccharomyces pombe (strain 972 / ATCC 24843) (Fission yeast).